A 169-amino-acid polypeptide reads, in one-letter code: General odorant-binding protein 57a (169 aa).

Positions 1–20 (MFNTRLAIFLLLIVVSLSQA) are cleaved as a signal peptide. 3 disulfide bridges follow: Cys-39–Cys-77, Cys-73–Cys-120, and Cys-111–Cys-129.

This sequence belongs to the PBP/GOBP family.

In terms of biological role, present in the aqueous fluid surrounding olfactory sensory dendrites and are thought to aid in the capture and transport of hydrophobic odorants into and through this fluid. The chain is General odorant-binding protein 57a from Drosophila melanogaster (Fruit fly).